Consider the following 2318-residue polypeptide: Neurogenic locus notch homolog protein 3 (2318 aa).

Over residues 1-14 (MGLGARGRRRRRRL) the composition is skewed to basic residues. Positions 1–20 (MGLGARGRRRRRRLMALPPP) are disordered. A signal peptide spans 1-39 (MGLGARGRRRRRRLMALPPPPPPMRALPLLLLLAGLGAA). EGF-like domains are found at residues 40–78 (APPC…ERCQ), 79–119 (LEDP…PDCS), and 120–157 (QPDP…QSCQ). At 40-1643 (APPCLDGSPC…PLEAPEQSVP (1604 aa)) the chain is on the extracellular side. 99 cysteine pairs are disulfide-bonded: cysteine 43/cysteine 55, cysteine 49/cysteine 66, cysteine 68/cysteine 77, cysteine 83/cysteine 94, cysteine 88/cysteine 107, cysteine 109/cysteine 118, cysteine 124/cysteine 135, cysteine 129/cysteine 145, cysteine 147/cysteine 156, cysteine 163/cysteine 175, cysteine 169/cysteine 184, cysteine 186/cysteine 195, cysteine 202/cysteine 213, cysteine 207/cysteine 223, cysteine 225/cysteine 234, cysteine 241/cysteine 252, cysteine 246/cysteine 261, cysteine 263/cysteine 272, cysteine 279/cysteine 292, cysteine 286/cysteine 301, cysteine 303/cysteine 312, cysteine 319/cysteine 330, cysteine 324/cysteine 339, cysteine 341/cysteine 350, cysteine 356/cysteine 367, cysteine 361/cysteine 378, cysteine 380/cysteine 389, cysteine 396/cysteine 409, cysteine 403/cysteine 418, cysteine 420/cysteine 429, cysteine 436/cysteine 447, cysteine 441/cysteine 456, cysteine 458/cysteine 467, cysteine 474/cysteine 485, cysteine 479/cysteine 494, cysteine 496/cysteine 505, cysteine 512/cysteine 523, cysteine 517/cysteine 532, cysteine 534/cysteine 543, cysteine 550/cysteine 560, cysteine 555/cysteine 569, cysteine 571/cysteine 580, cysteine 587/cysteine 598, cysteine 592/cysteine 607, cysteine 609/cysteine 618, cysteine 625/cysteine 635, cysteine 630/cysteine 644, cysteine 646/cysteine 655, cysteine 662/cysteine 673, cysteine 667/cysteine 682, cysteine 684/cysteine 693, cysteine 700/cysteine 710, cysteine 705/cysteine 719, cysteine 721/cysteine 730, cysteine 739/cysteine 750, cysteine 744/cysteine 759, cysteine 761/cysteine 770, cysteine 776/cysteine 787, cysteine 781/cysteine 797, cysteine 799/cysteine 808, cysteine 815/cysteine 827, cysteine 821/cysteine 836, cysteine 838/cysteine 847, cysteine 854/cysteine 865, cysteine 859/cysteine 874, cysteine 876/cysteine 885, cysteine 892/cysteine 902, cysteine 897/cysteine 911, cysteine 913/cysteine 922, cysteine 929/cysteine 940, cysteine 934/cysteine 949, cysteine 951/cysteine 960, cysteine 967/cysteine 978, cysteine 972/cysteine 987, cysteine 989/cysteine 998, cysteine 1005/cysteine 1016, cysteine 1010/cysteine 1023, cysteine 1025/cysteine 1034, cysteine 1041/cysteine 1062, cysteine 1056/cysteine 1071, cysteine 1073/cysteine 1082, cysteine 1089/cysteine 1100, cysteine 1094/cysteine 1109, cysteine 1111/cysteine 1120, cysteine 1127/cysteine 1138, cysteine 1132/cysteine 1147, cysteine 1149/cysteine 1158, cysteine 1165/cysteine 1183, cysteine 1177/cysteine 1192, cysteine 1194/cysteine 1203, cysteine 1210/cysteine 1223, cysteine 1215/cysteine 1233, cysteine 1235/cysteine 1244, cysteine 1251/cysteine 1262, cysteine 1256/cysteine 1276, cysteine 1278/cysteine 1287, cysteine 1294/cysteine 1305, cysteine 1299/cysteine 1314, and cysteine 1316/cysteine 1325. The 38-residue stretch at 159 to 196 (DIDECRSGTTCRHGGTCLNTPGSFRCQCPLGYTGLLCE) folds into the EGF-like 4; calcium-binding domain. An EGF-like 5 domain is found at 198 to 235 (PVVPCAPSPCRNGGTCRQSSDVTYDCACLPGFEGQNCE). In terms of domain architecture, EGF-like 6; calcium-binding spans 237-273 (NVDDCPGHRCLNGGTCVDGVNTYNCQCPPEWTGQFCT). Positions 275–313 (DVDECQLQPNACHNGGTCFNLLGGHSCVCVNGWTGESCS) constitute an EGF-like 7 domain. The region spanning 315 to 351 (NIDDCATAVCFHGATCHDRVASFYCACPMGKTGLLCH) is the EGF-like 8; calcium-binding domain. In terms of domain architecture, EGF-like 9 spans 352–390 (LDDACVSNPCHEDAICDTNPVSGRAICTCPPGFTGGACD). Residues 392-430 (DVDECSIGANPCEHLGRCVNTQGSFLCQCGRGYTGPRCE) enclose the EGF-like 10; calcium-binding domain. The 37-residue stretch at 432–468 (DVNECLSGPCRNQATCLDRIGQFTCICMAGFTGTYCE) folds into the EGF-like 11; calcium-binding domain. The region spanning 470–506 (DIDECQSSPCVNGGVCKDRVNGFSCTCPSGFSGSMCQ) is the EGF-like 12; calcium-binding domain. The EGF-like 13; calcium-binding domain occupies 508–544 (DVDECASTPCRNGAKCVDQPDGYECRCAEGFEGTLCE). Residues 546–581 (NVDDCSPDPCHHGRCVDGIASFSCACAPGYTGIRCE) enclose the EGF-like 14; calcium-binding domain. The region spanning 583-619 (QVDECRSQPCRYGGKCLDLVDKYLCRCPPGTTGVNCE) is the EGF-like 15; calcium-binding domain. Positions 621–656 (NIDDCASNPCTFGVCRDGINRYDCVCQPGFTGPLCN) constitute an EGF-like 16; calcium-binding domain. Residues 658–694 (EINECASSPCGEGGSCVDGENGFHCLCPPGSLPPLCL) enclose the EGF-like 17; calcium-binding domain. EGF-like domains are found at residues 696–731 (ANHP…PRCS), 735–771 (APDA…HQCE), and 772–809 (VLSP…PRCQ). Residues 811-848 (DVDECAGASPCGPHGTCTNLPGNFRCICHRGYTGPFCD) enclose the EGF-like 21; calcium-binding domain. Residues 850 to 886 (DIDDCDPNPCLHGGSCQDGVGSFSCSCLDGFAGPRCA) enclose the EGF-like 22; calcium-binding domain. The 36-residue stretch at 888 to 923 (DVDECLSSPCGPGTCTDHVASFTCACPPGYGGFHCE) folds into the EGF-like 23; calcium-binding domain. EGF-like domains follow at residues 925–961 (DLPD…THCQ), 963–999 (EADP…SQCQ), 1001–1035 (PVDW…RLCD), 1037–1083 (QSLP…SHCE), and 1085–1121 (EVDP…DSCE). An EGF-like 29; calcium-binding domain is found at 1123–1159 (NIDECASQPCQNGGSCIDLVARYLCSCPPGTLGVLCE). The 44-residue stretch at 1161–1204 (NEDDCDLGPSLDSGVQCLHNGTCVDLVGGFRCNCPPGYTGLHCE) folds into the EGF-like 30; calcium-binding domain. Asparagine 1180 carries N-linked (GlcNAc...) asparagine glycosylation. EGF-like domains follow at residues 1206 to 1245 (DINE…PRCQ), 1247 to 1288 (ALSP…LRCE), 1290 to 1326 (VARS…PSCR), and 1336 to 1374 (TNAS…PRCE). Asparagine 1337 carries an N-linked (GlcNAc...) asparagine glycan. Intrachain disulfides connect cysteine 1340–cysteine 1351, cysteine 1345–cysteine 1362, cysteine 1364–cysteine 1373, cysteine 1388–cysteine 1411, cysteine 1393–cysteine 1406, cysteine 1402–cysteine 1418, cysteine 1429–cysteine 1452, cysteine 1434–cysteine 1447, cysteine 1443–cysteine 1459, cysteine 1468–cysteine 1494, cysteine 1476–cysteine 1489, and cysteine 1485–cysteine 1501. LNR repeat units follow at residues 1388-1428 (CPRA…PWRQ), 1429-1466 (CEAL…GRDR), and 1468-1506 (CNPV…SEVP). Residue asparagine 1439 is glycosylated (N-linked (GlcNAc...) asparagine). Residues 1644–1664 (LLPLLVAGAVFLLIIFILGVM) traverse the membrane as a helical segment. The Cytoplasmic segment spans residues 1665-2318 (VARRKREHST…EVTPKRQVMA (654 aa)). ANK repeat units follow at residues 1839–1868 (TGET…DTNA), 1872–1902 (SGRT…DLDA), 1906–1935 (DGST…DVNA), 1939–1968 (LGKS…NKDM), and 1972–2001 (KEET…NREI). Disordered stretches follow at residues 2025–2045 (LDQP…PLLC) and 2058–2126 (QSGT…PLEG). Positions 2028-2045 (PSGPRSPSGPHGLGPLLC) are enriched in low complexity. Omega-N-methylarginine is present on arginine 2174. Residues 2184–2193 (SFLLPLAPGP) are compositionally biased toward low complexity. The segment at 2184–2318 (SFLLPLAPGP…EVTPKRQVMA (135 aa)) is disordered. The PEST-like stretch occupies residues 2242-2261 (HPYLTPSPESPEHWASPSPP). Positions 2262–2282 (SLSDWSDSTPSPATATNATAS) are enriched in low complexity. Positions 2296-2305 (SLPQSQTQLG) are enriched in polar residues.

Belongs to the NOTCH family. Interacts with PSMA1. Heterodimer of a C-terminal fragment N(TM) and a N-terminal fragment N(EC) which are probably linked by disulfide bonds. Interacts with MAML1, MAML2 and MAML3 which act as transcriptional coactivators for NOTCH3. Interacts with HIF1AN. Synthesized in the endoplasmic reticulum as an inactive form which is proteolytically cleaved by a furin-like convertase in the trans-Golgi network before it reaches the plasma membrane to yield an active, ligand-accessible form. Cleavage results in a C-terminal fragment N(TM) and a N-terminal fragment N(EC). Following ligand binding, it is cleaved by TNF-alpha converting enzyme (TACE) to yield a membrane-associated intermediate fragment called notch extracellular truncation (NEXT). This fragment is then cleaved by presenilin dependent gamma-secretase to release a notch-derived peptide containing the intracellular domain (NICD) from the membrane. In terms of processing, phosphorylated. Post-translationally, hydroxylated by HIF1AN. Proliferating neuroepithelium.

It localises to the cell membrane. It is found in the nucleus. In terms of biological role, functions as a receptor for membrane-bound ligands Jagged1, Jagged2 and Delta1 to regulate cell-fate determination. Upon ligand activation through the released notch intracellular domain (NICD) it forms a transcriptional activator complex with RBPJ/RBPSUH and activates genes of the enhancer of split locus. Affects the implementation of differentiation, proliferation and apoptotic programs. May play a role during CNS development. The sequence is that of Neurogenic locus notch homolog protein 3 (Notch3) from Mus musculus (Mouse).